A 309-amino-acid chain; its full sequence is Olfactory receptor 5H2 (309 aa).

The Extracellular segment spans residues 1–28; it reads MEQDNTTLLTEFVLTGLTYQPEWKMPLF. Asn-5 carries an N-linked (GlcNAc...) asparagine glycan. The helical transmembrane segment at 29 to 49 threads the bilayer; that stretch reads LVFLVIYLITIVWNLGLIALI. The Cytoplasmic segment spans residues 50–56; the sequence is WNDPQLH. A helical transmembrane segment spans residues 57–77; sequence IPMYFFLGSLAFVDAWISSTV. Residues 78 to 97 are Extracellular-facing; sequence TPKMLVNFLAKNRMISLSEC. A disulfide bridge links Cys-97 with Cys-179. The helical transmembrane segment at 98–118 threads the bilayer; the sequence is MIQFFSFAFGGTTECFLLATM. Over 119–143 the chain is Cytoplasmic; that stretch reads AYDRYVAICKPLLYPVIMNNSLCIR. A helical transmembrane segment spans residues 144–164; the sequence is LLAFSFLGGFLHALIHEVLIF. At 165–193 the chain is on the extracellular side; that stretch reads RLTFCNSNIIHHFYCDIIPLFMISCTDPS. A helical transmembrane segment spans residues 194–214; the sequence is INFLMVFILSGSIQVFTIVTV. The Cytoplasmic portion of the chain corresponds to 215 to 239; sequence LNSYTFALFTILKKKSVRGVRKAFS. A helical transmembrane segment spans residues 240 to 260; sequence TCGAHLLSVSLYYGPLIFMYL. Residues 261–271 are Extracellular-facing; the sequence is RPASPQADDQD. A helical membrane pass occupies residues 272-292; sequence MIDSVFYTIIIPLLNPIIYSL. Residues 293-309 are Cytoplasmic-facing; that stretch reads RNKQVIDSFTKMVKRNV.

Belongs to the G-protein coupled receptor 1 family.

It is found in the cell membrane. Functionally, odorant receptor. This is Olfactory receptor 5H2 (OR5H2) from Homo sapiens (Human).